We begin with the raw amino-acid sequence, 331 residues long: Probable cyclic nucleotide synthase IK1_05630 (331 aa).

The protein belongs to the CD-NTase family. D12 subfamily.

Cyclic nucleotide synthase (second messenger synthase) of a CBASS antivirus system. CBASS (cyclic oligonucleotide-based antiphage signaling system) provides immunity against bacteriophage. The CD-NTase protein synthesizes cyclic nucleotides in response to infection; these serve as specific second messenger signals. The signals activate a diverse range of effectors, leading to bacterial cell death and thus abortive phage infection. A type I-B CBASS system. Its function is as follows. Probably a cyclic nucleotide synthase that makes second messenger nucleotide which activates a CBASS antiviral defense system. In terms of biological role, protects B.subtilis against phage infection. When IK1_05630 and IK1_05631 are introduced in B.subtilis BEST7003 there is 1000-fold protection against phage SBSphiC. Both genes are required for protection. Activation leads to bacterial cell lysis and death, which occurs before the phage has finished its replication cycle, thus protecting non-infected bacteria by aborting the phage infection and preventing its propagation. The sequence is that of Probable cyclic nucleotide synthase IK1_05630 from Bacillus cereus (strain VD146).